Reading from the N-terminus, the 1223-residue chain is WD repeat-containing protein 11 (1223 aa).

WD repeat units follow at residues 59–108 (KHKA…AQCE) and 111–154 (EHVK…KLWK). Ser205 and Ser209 each carry phosphoserine. The stretch at 354–393 (KTVRPFSMVCCPVNENAAALIVSDGRVMIWELKSAVCSRN) is one WD 3 repeat. Ser401 and Ser405 each carry phosphoserine. WD repeat units lie at residues 470–509 (RMCP…LHKE), 565–604 (NDES…LLRE), 707–744 (GSMG…SRGI), 746–786 (THRS…MVSS), 792–830 (NVTF…TCFR), and 892–939 (ALSN…HSLS).

In terms of assembly, component of the complex WDR11 composed of C17orf75, FAM91A1 and WDR11; FAM91A1 and WDR11 are required for proper location of the complex. Interacts with GLI3; the interaction associateS EMX1 with GLI3. Interacts with TBC1D23; this interaction may be indirect and recruits TBC1D23 to AP-1-derived vesicles. Interacts (via the N-terminal and the central portion of the protein) with EMX1. Broadly expressed in various organs including brain, eye,ear, lung, heart, kideny and gonads. Cerebral cortex. The entire developing central nervous system, except for the spinal cord, reveals expression. Expressed in the neuroepithelium, including the diencephalic region that gives rise to hypothalamic neurons. In the adult brain, intense expression is restricted to the olfactory bulb, the olfaction-related piriform cortex, the granule cell layer of the cerebellum, and neurons of the hippocampal formation. The brain demonstrated expression scattered throughout the hypothalamus, sometimes in clusters of neurons.

It is found in the cytoplasm. It localises to the cytoskeleton. The protein localises to the cilium basal body. Its subcellular location is the nucleus. The protein resides in the cilium axoneme. It is found in the cytoplasmic vesicle. It localises to the golgi apparatus. The protein localises to the trans-Golgi network. Functionally, involved in the Hedgehog (Hh) signaling pathway, is essential for normal ciliogenesis. Regulates the proteolytic processing of GLI3 and cooperates with the transcription factor EMX1 in the induction of downstream Hh pathway gene expression and gonadotropin-releasing hormone production. WDR11 complex facilitates the tethering of Adaptor protein-1 complex (AP-1)-derived vesicles. WDR11 complex acts together with TBC1D23 to facilitate the golgin-mediated capture of vesicles generated using AP-1. This Mus musculus (Mouse) protein is WD repeat-containing protein 11 (Wdr11).